Here is a 492-residue protein sequence, read N- to C-terminus: Trichothecene C-15 hydroxylase (492 aa).

A helical transmembrane segment spans residues 6–26 (LWPLLALSGGTGLAYLVVVVV). Over residues 88-106 (AMKDVRGHRKSGEPEHGKD) the composition is skewed to basic and acidic residues. Residues 88–116 (AMKDVRGHRKSGEPEHGKDPISVQSNGDN) form a disordered region. N-linked (GlcNAc...) asparagine glycosylation is found at Asn124, Asn198, and Asn290. Residue Cys438 coordinates heme.

The protein belongs to the cytochrome P450 family. The cofactor is heme.

The protein resides in the membrane. The protein operates within sesquiterpene biosynthesis; trichothecene biosynthesis. Functionally, trichothecene C-15 hydroxylase; part of the core gene cluster that mediates the biosynthesis of trichothecenes, a very large family of chemically related bicyclic sesquiterpene compounds acting as mycotoxins, including T2-toxin. The biosynthesis of trichothecenes begins with the cyclization of farnesyl diphosphate to trichodiene and is catalyzed by the trichodiene synthase TRI5. Trichodiene undergoes a series of oxygenations catalyzed by the cytochrome P450 monooxygenase TRI4. TRI4 controls the addition of four oxygens at C-2, C-3, C-11, and the C-12, C-13-epoxide to form the intermediate isotrichotriol. Isotrichotriol then undergoes a non-enzymatic isomerization and cyclization to form isotrichodermol. During this process, the oxygen at the C-2 position becomes the pyran ring oxygen and the hydroxyl group at C-11 is lost. More complex type A trichothecenes are built by modifying isotrichodermol through a series of paired hydroxylation and acetylation or acylation steps. Isotrichodermol is converted to isotrichodermin by the acetyltransferase TRI101. TRI101 encodes a C-3 transacetylase that acts as a self-protection or resistance factor during biosynthesis and that the presence of a free C-3 hydroxyl group is a key component of Fusarium trichothecene phytotoxicity. A second hydroxyl group is added to C-15 by the trichothecene C-15 hydroxylase TRI11, producing 15-decalonectrin, which is then acetylated by TRI3, producing calonectrin. A third hydroxyl group is added at C-4 by the cytochrome P450 monooxygenase TRI13, converting calonectrin to 3,15-diacetoxyspirpenol, which is subsequently acetylated by the acetyltransferase TRI7. A fourth hydroxyl group is added to C-8 by the cytochrome P450 monooxygenase TRI1, followed by the addition of an isovaleryl moiety by TRI16. Finally, the acetyl group is removed from the C-3 position by the trichothecene C-3 esterase TRI8 to produce T-2 toxin. The polypeptide is Trichothecene C-15 hydroxylase (Fusarium sporotrichioides).